A 676-amino-acid chain; its full sequence is Multisubstrate pseudouridine synthase 7 (676 aa).

Disordered regions lie at residues 1–27 (MSDS…AKKL) and 87–110 (KMPK…AARR). The residue at position 2 (Ser-2) is an N-acetylserine. Residues 94–110 (RSKEEVNAEKESEAARR) show a composition bias toward basic and acidic residues. The active-site Nucleophile is the Asp-256. The region spanning 338 to 582 (GFINYFGMQR…AGSYRTVIQK (245 aa)) is the TRUD domain.

This sequence belongs to the pseudouridine synthase TruD family.

It localises to the nucleus. It is found in the cytoplasm. It catalyses the reaction uridine in 5S rRNA = pseudouridine in 5S rRNA. The enzyme catalyses uridine in snRNA = pseudouridine in snRNA. It carries out the reaction uridine(13) in tRNA = pseudouridine(13) in tRNA. The catalysed reaction is a uridine in mRNA = a pseudouridine in mRNA. Its function is as follows. Catalyzes pseudouridylation at position 35 in U2 snRNA stem-loop II region which induces particular conformation of the mRNA-U2 snRNA duplex and places the nucleophile in an accessible position for the first step of splicing. Also catalyzes pseudouridylation at position 56 in U2 snRNA. Also catalyzes pseudouridylation at position 50 in 5S rRNA, position 13 in cytoplasmic tRNAs, and position 35 in pre-tRNA(Tyr). Pseudouridine residues in tRNAs may stabilize the local RNA conformation, favor interactions with protein partners and play an important role in the stabilization of the codon-anticodon interaction with mRNA. Also catalyzes pseudouridylation of mRNAs in response to heat shock: mediates pseudouridylation of mRNAs with the consensus sequence 5'-UGUAR-3'. The protein is Multisubstrate pseudouridine synthase 7 of Saccharomyces cerevisiae (strain ATCC 204508 / S288c) (Baker's yeast).